Consider the following 87-residue polypeptide: FXYD domain-containing ion transport regulator 3 (87 aa).

Positions 1–20 (MQKVTLGLLVFLAGFPVLDA) are cleaved as a signal peptide. Residues 21 to 38 (NDLEDKNSPFYYDWHSLQ) lie on the Extracellular side of the membrane. Residues 39-59 (VGGLICAGVLCAMGIIIVMSA) traverse the membrane as a helical segment. Topologically, residues 60–87 (KCKCKFGQKSGHHPGETPPLITPGSAQS) are cytoplasmic. The interval 66 to 87 (GQKSGHHPGETPPLITPGSAQS) is disordered.

The protein belongs to the FXYD family. Regulatory subunit of the sodium/potassium-transporting ATPase which is composed of a catalytic alpha subunit, a non-catalytic beta subunit and an additional regulatory subunit. Interacts with catalytic alpha subunit ATP1A1. Also interacts with non-catalytic beta subunit ATP1B1. Interacts with the ATP1A1-ATP1B1, ATP1A2-ATP1B1 and ATP1A3-ATP1B1 NKA isozymes. In terms of processing, glutathionylated. As to expression, isoform 1: Expressed mainly in differentiated cells (at protein level). Isoform 2: Expressed mainly in undifferentiated cells (at protein level).

The protein localises to the cell membrane. Associates with and regulates the activity of the sodium/potassium-transporting ATPase (NKA) which transports Na(+) out of the cell and K(+) into the cell. Reduces glutathionylation of the NKA beta-1 subunit ATP1B1, thus reversing glutathionylation-mediated inhibition of ATP1B1. Induces a hyperpolarization-activated chloride current when expressed in Xenopus oocytes. Its function is as follows. Decreases the apparent K+ and Na+ affinity of the sodium/potassium-transporting ATPase over a large range of membrane potentials. In terms of biological role, decreases the apparent K+ affinity of the sodium/potassium-transporting ATPase only at slightly negative and positive membrane potentials and increases the apparent Na+ affinity over a large range of membrane potentials. The chain is FXYD domain-containing ion transport regulator 3 (FXYD3) from Homo sapiens (Human).